Reading from the N-terminus, the 179-residue chain is Segregation and condensation protein B (179 aa).

Belongs to the ScpB family. As to quaternary structure, homodimer. Homodimerization may be required to stabilize the binding of ScpA to the Smc head domains. Component of a cohesin-like complex composed of ScpA, ScpB and the Smc homodimer, in which ScpA and ScpB bind to the head domain of Smc. The presence of the three proteins is required for the association of the complex with DNA.

The protein resides in the cytoplasm. Its function is as follows. Participates in chromosomal partition during cell division. May act via the formation of a condensin-like complex containing Smc and ScpA that pull DNA away from mid-cell into both cell halves. In Streptococcus equi subsp. equi (strain 4047), this protein is Segregation and condensation protein B.